Reading from the N-terminus, the 60-residue chain is Large ribosomal subunit protein uL30 (60 aa).

The protein belongs to the universal ribosomal protein uL30 family. In terms of assembly, part of the 50S ribosomal subunit.

The chain is Large ribosomal subunit protein uL30 from Streptococcus mutans serotype c (strain ATCC 700610 / UA159).